Here is a 272-residue protein sequence, read N- to C-terminus: Phosphatidylglycerol--prolipoprotein diacylglyceryl transferase (272 aa).

The next 4 helical transmembrane spans lie at 16-36 (VGLHLSWYGILFSLGIFLSSF), 62-82 (FALGALLAIIIGARLAYVLFY), 97-117 (IWKGGLSSHGAVISVVIWAAV), and 129-149 (LSVTYICDLCGAVFGCAALLI). Arg-150 provides a ligand contact to a 1,2-diacyl-sn-glycero-3-phospho-(1'-sn-glycerol). The next 2 helical transmembrane spans lie at 206 to 226 (GVIRLGSGYSAAGALIGVAVI) and 246 to 266 (ILTIGQWLSIPMIFLGVGIIW).

It belongs to the Lgt family.

Its subcellular location is the cell inner membrane. It catalyses the reaction L-cysteinyl-[prolipoprotein] + a 1,2-diacyl-sn-glycero-3-phospho-(1'-sn-glycerol) = an S-1,2-diacyl-sn-glyceryl-L-cysteinyl-[prolipoprotein] + sn-glycerol 1-phosphate + H(+). The protein operates within protein modification; lipoprotein biosynthesis (diacylglyceryl transfer). Catalyzes the transfer of the diacylglyceryl group from phosphatidylglycerol to the sulfhydryl group of the N-terminal cysteine of a prolipoprotein, the first step in the formation of mature lipoproteins. In Chlamydia trachomatis serovar D (strain ATCC VR-885 / DSM 19411 / UW-3/Cx), this protein is Phosphatidylglycerol--prolipoprotein diacylglyceryl transferase.